Consider the following 218-residue polypeptide: Adenylate kinase (218 aa).

Residue Gly10–Thr15 participates in ATP binding. The tract at residues Ser30–Val59 is NMP. Residues Thr31, Arg36, Lys57–Val59, Gly85–Arg88, and Gln92 contribute to the AMP site. Positions Gly122 to Asp159 are LID. Residues Arg123 and Thr132–Tyr133 contribute to the ATP site. AMP contacts are provided by Arg156 and Arg167. Residue Gly203 participates in ATP binding.

The protein belongs to the adenylate kinase family. As to quaternary structure, monomer.

It is found in the cytoplasm. The enzyme catalyses AMP + ATP = 2 ADP. Its pathway is purine metabolism; AMP biosynthesis via salvage pathway; AMP from ADP: step 1/1. In terms of biological role, catalyzes the reversible transfer of the terminal phosphate group between ATP and AMP. Plays an important role in cellular energy homeostasis and in adenine nucleotide metabolism. In Chlorobium phaeobacteroides (strain DSM 266 / SMG 266 / 2430), this protein is Adenylate kinase.